The primary structure comprises 756 residues: Subtilisin-like protease SBT3.9 (756 aa).

Positions 1 to 25 (MSKTILFLALFLSIVLNVQISFVVA) are cleaved as a signal peptide. Residues 26 to 108 (ESKVYVVYLG…VIPNTLYEMT (83 aa)) constitute a propeptide, activation peptide. Residues 29-106 (VYVVYLGEKE…VQVIPNTLYE (78 aa)) enclose the Inhibitor I9 domain. Positions 112–603 (TWDYLGVSPG…GGLINPEKAV (492 aa)) constitute a Peptidase S8 domain. D142 serves as the catalytic Charge relay system. N175 and N202 each carry an N-linked (GlcNAc...) asparagine glycan. H218 acts as the Charge relay system in catalysis. N-linked (GlcNAc...) asparagine glycosylation is found at N233, N357, N395, and N519. Residues 386-460 (DCEKLSANPN…ELGTDILFYI (75 aa)) form the PA domain. The active-site Charge relay system is the S534.

The protein belongs to the peptidase S8 family.

It is found in the secreted. The chain is Subtilisin-like protease SBT3.9 from Arabidopsis thaliana (Mouse-ear cress).